Here is a 127-residue protein sequence, read N- to C-terminus: Small ribosomal subunit protein uS12 (127 aa).

The interval 8 to 28 is disordered; that stretch reads IRTEREKARQKTKSPALKQCP. D89 carries the post-translational modification 3-methylthioaspartic acid. The tract at residues 102–127 is disordered; it reads LDTAGVKDRKQGRSKYGTKRPKEAKK. A compositionally biased stretch (basic residues) spans 113–127; that stretch reads GRSKYGTKRPKEAKK.

This sequence belongs to the universal ribosomal protein uS12 family. In terms of assembly, part of the 30S ribosomal subunit. Contacts proteins S8 and S17. May interact with IF1 in the 30S initiation complex.

Functionally, with S4 and S5 plays an important role in translational accuracy. Interacts with and stabilizes bases of the 16S rRNA that are involved in tRNA selection in the A site and with the mRNA backbone. Located at the interface of the 30S and 50S subunits, it traverses the body of the 30S subunit contacting proteins on the other side and probably holding the rRNA structure together. The combined cluster of proteins S8, S12 and S17 appears to hold together the shoulder and platform of the 30S subunit. In Nostoc sp. (strain PCC 7120 / SAG 25.82 / UTEX 2576), this protein is Small ribosomal subunit protein uS12.